The chain runs to 178 residues: Large ribosomal subunit protein uL6c (178 aa).

This sequence belongs to the universal ribosomal protein uL6 family. Part of the 50S ribosomal subunit.

It is found in the plastid. The protein localises to the chloroplast. In terms of biological role, binds 23S rRNA. The chain is Large ribosomal subunit protein uL6c (rpl6) from Phaeodactylum tricornutum (strain CCAP 1055/1).